The following is a 215-amino-acid chain: Beta-crystallin A3 (215 aa).

An N-terminal arm region spans residues 1–30; it reads MGEAAVPPELDTFPAAKMAQTNPLPVPMGP. 2 Beta/gamma crystallin 'Greek key' domains span residues 31 to 70 and 71 to 117; these read WKIT…KVEC and GAWV…RPVC. Residues 118-123 form a connecting peptide region; sequence SANHKE. 2 Beta/gamma crystallin 'Greek key' domains span residues 124-165 and 166-214; these read SKIT…KIPC and GAWV…RRIQ.

Belongs to the beta/gamma-crystallin family. Homo/heterodimer, or complexes of higher-order. The structure of beta-crystallin oligomers seems to be stabilized through interactions between the N-terminal arms.

Crystallins are the dominant structural components of the vertebrate eye lens. This Gallus gallus (Chicken) protein is Beta-crystallin A3 (CRYBA1).